We begin with the raw amino-acid sequence, 97 residues long: uncharacterized protein (97 aa).

Over residues 1–20 (MAKEQTDRTTLDLFAHERRP) the composition is skewed to basic and acidic residues. Positions 1–30 (MAKEQTDRTTLDLFAHERRPGRPKTNPLSR) are disordered.

This is an uncharacterized protein from Escherichia coli O157:H7.